The sequence spans 165 residues: CDP-archaeol synthase (165 aa).

Helical transmembrane passes span 41-61 (GLIC…WLVG), 72-92 (ILSV…KSFI), 103-123 (AWPV…TIIF), and 127-147 (WFFA…TPVL).

This sequence belongs to the CDP-archaeol synthase family. Mg(2+) is required as a cofactor.

The protein resides in the cell membrane. It carries out the reaction 2,3-bis-O-(geranylgeranyl)-sn-glycerol 1-phosphate + CTP + H(+) = CDP-2,3-bis-O-(geranylgeranyl)-sn-glycerol + diphosphate. It functions in the pathway membrane lipid metabolism; glycerophospholipid metabolism. Catalyzes the formation of CDP-2,3-bis-(O-geranylgeranyl)-sn-glycerol (CDP-archaeol) from 2,3-bis-(O-geranylgeranyl)-sn-glycerol 1-phosphate (DGGGP) and CTP. This reaction is the third ether-bond-formation step in the biosynthesis of archaeal membrane lipids. This chain is CDP-archaeol synthase, found in Methanoregula boonei (strain DSM 21154 / JCM 14090 / 6A8).